The sequence spans 181 residues: Small ribosomal subunit protein cS23 (181 aa).

Residues 1-40 (MLPMSVHPATTPALASRPRVSLPRPSTPSSSSSLVHLKSR) form a disordered region. A compositionally biased stretch (low complexity) spans 14–36 (LASRPRVSLPRPSTPSSSSSLVH).

Belongs to the chloroplast-specific ribosomal protein cS23 family. Part of the 30S ribosomal subunit.

It localises to the plastid. Its subcellular location is the chloroplast. Component of the chloroplast ribosome (chloro-ribosome), a dedicated translation machinery responsible for the synthesis of chloroplast genome-encoded proteins, including proteins of the transcription and translation machinery and components of the photosynthetic apparatus. This Hordeum vulgare (Barley) protein is Small ribosomal subunit protein cS23 (PSRP3).